Reading from the N-terminus, the 137-residue chain is Putative pumilio homolog 25 (137 aa).

Pumilio repeat units lie at residues Glu70–Ser105 and Ser108–Ala137.

It localises to the cytoplasm. Its function is as follows. Sequence-specific RNA-binding protein that regulates translation and mRNA stability by binding the 3'-UTR of target mRNAs. This chain is Putative pumilio homolog 25 (APUM25), found in Arabidopsis thaliana (Mouse-ear cress).